A 127-amino-acid polypeptide reads, in one-letter code: Aspartate 1-decarboxylase (127 aa).

Ser25 functions as the Schiff-base intermediate with substrate; via pyruvic acid in the catalytic mechanism. Ser25 is subject to Pyruvic acid (Ser). Thr57 contributes to the substrate binding site. Tyr58 serves as the catalytic Proton donor. 73-75 (GAA) contributes to the substrate binding site.

This sequence belongs to the PanD family. As to quaternary structure, heterooctamer of four alpha and four beta subunits. Pyruvate serves as cofactor. In terms of processing, is synthesized initially as an inactive proenzyme, which is activated by self-cleavage at a specific serine bond to produce a beta-subunit with a hydroxyl group at its C-terminus and an alpha-subunit with a pyruvoyl group at its N-terminus.

It is found in the cytoplasm. It catalyses the reaction L-aspartate + H(+) = beta-alanine + CO2. It participates in cofactor biosynthesis; (R)-pantothenate biosynthesis; beta-alanine from L-aspartate: step 1/1. Catalyzes the pyruvoyl-dependent decarboxylation of aspartate to produce beta-alanine. This is Aspartate 1-decarboxylase from Bacillus cytotoxicus (strain DSM 22905 / CIP 110041 / 391-98 / NVH 391-98).